A 637-amino-acid polypeptide reads, in one-letter code: Anthranilate synthase, phenazine specific (637 aa).

The interval 1-434 (MSQTAAHLME…QREQIQADFS (434 aa)) is anthranilate synthase component I. The Glutamine amidotransferase type-1 domain maps to 437–628 (QVLIVDAEDT…LRHALIHTPV (192 aa)). Catalysis depends on for GATase activity residues Cys517, His602, and Glu604.

The enzyme catalyses chorismate + L-glutamine = anthranilate + pyruvate + L-glutamate + H(+). It participates in antibiotic biosynthesis; phenazine biosynthesis. Involved in the biosynthesis of the antibiotic, phenazine, a nitrogen-containing heterocyclic molecule having important roles in virulence, competition and biological control. The polypeptide is Anthranilate synthase, phenazine specific (phzB) (Pseudomonas chlororaphis (Pseudomonas aureofaciens)).